The sequence spans 180 residues: Large ribosomal subunit protein uL6 (180 aa).

The protein belongs to the universal ribosomal protein uL6 family. In terms of assembly, part of the 50S ribosomal subunit.

Its function is as follows. This protein binds to the 23S rRNA, and is important in its secondary structure. It is located near the subunit interface in the base of the L7/L12 stalk, and near the tRNA binding site of the peptidyltransferase center. This Borrelia hermsii (strain HS1 / DAH) protein is Large ribosomal subunit protein uL6.